Here is a 291-residue protein sequence, read N- to C-terminus: Aspartate carbamoyltransferase catalytic subunit (291 aa).

2 residues coordinate carbamoyl phosphate: Arg49 and Thr50. Lys77 is a binding site for L-aspartate. The carbamoyl phosphate site is built by Arg99, His127, and Gln130. L-aspartate is bound by residues Arg160 and Arg210. Residues Gly249 and Pro250 each coordinate carbamoyl phosphate.

This sequence belongs to the aspartate/ornithine carbamoyltransferase superfamily. ATCase family. As to quaternary structure, heterododecamer (2C3:3R2) of six catalytic PyrB chains organized as two trimers (C3), and six regulatory PyrI chains organized as three dimers (R2).

It carries out the reaction carbamoyl phosphate + L-aspartate = N-carbamoyl-L-aspartate + phosphate + H(+). Its pathway is pyrimidine metabolism; UMP biosynthesis via de novo pathway; (S)-dihydroorotate from bicarbonate: step 2/3. In terms of biological role, catalyzes the condensation of carbamoyl phosphate and aspartate to form carbamoyl aspartate and inorganic phosphate, the committed step in the de novo pyrimidine nucleotide biosynthesis pathway. The sequence is that of Aspartate carbamoyltransferase catalytic subunit from Sulfurimonas denitrificans (strain ATCC 33889 / DSM 1251) (Thiomicrospira denitrificans (strain ATCC 33889 / DSM 1251)).